Consider the following 366-residue polypeptide: Ribosomal RNA large subunit methyltransferase M (366 aa).

Residues S188, 221 to 224 (CPGG), D240, D260, and D277 contribute to the S-adenosyl-L-methionine site. K306 serves as the catalytic Proton acceptor.

It belongs to the class I-like SAM-binding methyltransferase superfamily. RNA methyltransferase RlmE family. RlmM subfamily. Monomer.

Its subcellular location is the cytoplasm. It catalyses the reaction cytidine(2498) in 23S rRNA + S-adenosyl-L-methionine = 2'-O-methylcytidine(2498) in 23S rRNA + S-adenosyl-L-homocysteine + H(+). Catalyzes the 2'-O-methylation at nucleotide C2498 in 23S rRNA. The polypeptide is Ribosomal RNA large subunit methyltransferase M (Salmonella agona (strain SL483)).